The primary structure comprises 548 residues: Chaperonin GroEL (548 aa).

Residues 30–33, Lys51, 87–91, Gly415, 479–481, and Asp495 contribute to the ATP site; these read TLGP, DGTTT, and NAA. A disordered region spans residues 525–548; the sequence is PKEDKTSDASSSPAGGMGGMGGMM. The segment covering 539 to 548 has biased composition (gly residues); sequence GGMGGMGGMM.

It belongs to the chaperonin (HSP60) family. In terms of assembly, forms a cylinder of 14 subunits composed of two heptameric rings stacked back-to-back. Interacts with the co-chaperonin GroES.

The protein localises to the cytoplasm. It catalyses the reaction ATP + H2O + a folded polypeptide = ADP + phosphate + an unfolded polypeptide.. In terms of biological role, together with its co-chaperonin GroES, plays an essential role in assisting protein folding. The GroEL-GroES system forms a nano-cage that allows encapsulation of the non-native substrate proteins and provides a physical environment optimized to promote and accelerate protein folding. This Buchnera aphidicola subsp. Rhopalosiphum maidis protein is Chaperonin GroEL.